The chain runs to 542 residues: CTP synthase (542 aa).

Residues 1–265 (MARYIFITGG…DQEVLAAFGI (265 aa)) are amidoligase domain. S13 lines the CTP pocket. A UTP-binding site is contributed by S13. 14-19 (SLGKGL) contributes to the ATP binding site. Y54 contributes to the L-glutamine binding site. D71 contributes to the ATP binding site. D71 and E139 together coordinate Mg(2+). CTP is bound by residues 146-148 (DIE), 186-191 (KTKPTQ), and K222. Residues 186–191 (KTKPTQ) and K222 each bind UTP. 238–240 (RDV) serves as a coordination point for ATP. The Glutamine amidotransferase type-1 domain maps to 291-541 (TIAIVGKYTG…IAAALEQSRL (251 aa)). G353 is an L-glutamine binding site. The Nucleophile; for glutamine hydrolysis role is filled by C380. L-glutamine contacts are provided by residues 381–384 (FGMQ), E404, and R469. Active-site residues include H514 and E516.

The protein belongs to the CTP synthase family. In terms of assembly, homotetramer.

The enzyme catalyses UTP + L-glutamine + ATP + H2O = CTP + L-glutamate + ADP + phosphate + 2 H(+). It carries out the reaction L-glutamine + H2O = L-glutamate + NH4(+). It catalyses the reaction UTP + NH4(+) + ATP = CTP + ADP + phosphate + 2 H(+). Its pathway is pyrimidine metabolism; CTP biosynthesis via de novo pathway; CTP from UDP: step 2/2. With respect to regulation, allosterically activated by GTP, when glutamine is the substrate; GTP has no effect on the reaction when ammonia is the substrate. The allosteric effector GTP functions by stabilizing the protein conformation that binds the tetrahedral intermediate(s) formed during glutamine hydrolysis. Inhibited by the product CTP, via allosteric rather than competitive inhibition. In terms of biological role, catalyzes the ATP-dependent amination of UTP to CTP with either L-glutamine or ammonia as the source of nitrogen. Regulates intracellular CTP levels through interactions with the four ribonucleotide triphosphates. This Methylocella silvestris (strain DSM 15510 / CIP 108128 / LMG 27833 / NCIMB 13906 / BL2) protein is CTP synthase.